A 216-amino-acid chain; its full sequence is Nucleoside triphosphate pyrophosphatase (216 aa).

D82 serves as the catalytic Proton acceptor.

It belongs to the Maf family. The cofactor is a divalent metal cation.

It is found in the cytoplasm. The catalysed reaction is a ribonucleoside 5'-triphosphate + H2O = a ribonucleoside 5'-phosphate + diphosphate + H(+). The enzyme catalyses a 2'-deoxyribonucleoside 5'-triphosphate + H2O = a 2'-deoxyribonucleoside 5'-phosphate + diphosphate + H(+). Nucleoside triphosphate pyrophosphatase. May have a dual role in cell division arrest and in preventing the incorporation of modified nucleotides into cellular nucleic acids. This is Nucleoside triphosphate pyrophosphatase from Mycobacterium marinum (strain ATCC BAA-535 / M).